A 326-amino-acid polypeptide reads, in one-letter code: Tetraketide alpha-pyrone reductase 1 (326 aa).

NADP(+)-binding positions include 8-32 (VCVT…GYEV), Lys44, and Tyr162.

It belongs to the NAD(P)-dependent epimerase/dehydratase family. Dihydroflavonol-4-reductase subfamily. As to quaternary structure, interacts with 4CLL1/ACOS5, PKSA and PKSB. In terms of tissue distribution, specifically expressed in anther tapetal cells during microspores development.

It localises to the cytoplasm. It is found in the nucleus. The protein localises to the endoplasmic reticulum. Involved in the biosynthesis of hydroxylated tetraketide compounds that serve as sporopollenin precursors (the main constituents of exine). Is essential for pollen wall development. Acts on tetraketide alpha-pyrones and reduces the carbonyl function on the tetraketide alkyl chain to a secondary alcohol function. The polypeptide is Tetraketide alpha-pyrone reductase 1 (TKPR1) (Arabidopsis thaliana (Mouse-ear cress)).